A 260-amino-acid polypeptide reads, in one-letter code: Hydroxyethylthiazole kinase 1 (260 aa).

Met-39 serves as a coordination point for substrate. ATP contacts are provided by Arg-115 and Thr-160. Gly-187 contributes to the substrate binding site.

Belongs to the Thz kinase family. The cofactor is Mg(2+).

It carries out the reaction 5-(2-hydroxyethyl)-4-methylthiazole + ATP = 4-methyl-5-(2-phosphooxyethyl)-thiazole + ADP + H(+). Its pathway is cofactor biosynthesis; thiamine diphosphate biosynthesis; 4-methyl-5-(2-phosphoethyl)-thiazole from 5-(2-hydroxyethyl)-4-methylthiazole: step 1/1. Functionally, catalyzes the phosphorylation of the hydroxyl group of 4-methyl-5-beta-hydroxyethylthiazole (THZ). This is Hydroxyethylthiazole kinase 1 from Streptococcus pneumoniae (strain P1031).